Here is a 775-residue protein sequence, read N- to C-terminus: Subtilisin-like protease SBT1.5 (775 aa).

Positions 1–19 (MAFFFYFFFLLTLSSPSSS) are cleaved as a signal peptide. The propeptide at 20–103 (ASSSNSLTYI…VIPEQVRHLH (84 aa)) is activation peptide. The region spanning 27 to 103 (TYIVHVDHEA…VIPEQVRHLH (77 aa)) is the Inhibitor I9 domain. One can recognise a Peptidase S8 domain in the interval 107–617 (SPEFLGLRST…SGHVHPTKAM (511 aa)). Asp137 acts as the Charge relay system in catalysis. N-linked (GlcNAc...) asparagine glycosylation is present at Asn196. His210 serves as the catalytic Charge relay system. Residues 367-459 (MYPLVYGGSL…VGASGGDEIR (93 aa)) form the PA domain. Catalysis depends on Ser549, which acts as the Charge relay system. Residues Asn599, Asn638, and Asn762 are each glycosylated (N-linked (GlcNAc...) asparagine).

The protein belongs to the peptidase S8 family.

The protein resides in the secreted. The chain is Subtilisin-like protease SBT1.5 from Arabidopsis thaliana (Mouse-ear cress).